The chain runs to 302 residues: Ribosomal RNA small subunit methyltransferase A (302 aa).

S-adenosyl-L-methionine is bound by residues histidine 15, leucine 17, glycine 42, glutamate 64, aspartate 89, and asparagine 109. The disordered stretch occupies residues 275-302 (DAASADGHDHGDGSGQGESSPGGARDQI).

It belongs to the class I-like SAM-binding methyltransferase superfamily. rRNA adenine N(6)-methyltransferase family. RsmA subfamily.

It is found in the cytoplasm. The catalysed reaction is adenosine(1518)/adenosine(1519) in 16S rRNA + 4 S-adenosyl-L-methionine = N(6)-dimethyladenosine(1518)/N(6)-dimethyladenosine(1519) in 16S rRNA + 4 S-adenosyl-L-homocysteine + 4 H(+). Specifically dimethylates two adjacent adenosines (A1518 and A1519) in the loop of a conserved hairpin near the 3'-end of 16S rRNA in the 30S particle. May play a critical role in biogenesis of 30S subunits. The protein is Ribosomal RNA small subunit methyltransferase A of Parasynechococcus marenigrum (strain WH8102).